The primary structure comprises 591 residues: Aspartate--tRNA ligase (591 aa).

Glutamate 171 lines the L-aspartate pocket. The segment at 195–198 is aspartate; the sequence is QLFK. Arginine 217 serves as a coordination point for L-aspartate. Residues 217–219 and glutamine 226 each bind ATP; that span reads RDE. Histidine 448 is a binding site for L-aspartate. ATP is bound at residue glutamate 482. L-aspartate is bound at residue arginine 489. Position 534 to 537 (534 to 537) interacts with ATP; sequence GLDR.

This sequence belongs to the class-II aminoacyl-tRNA synthetase family. Type 1 subfamily. As to quaternary structure, homodimer.

It is found in the cytoplasm. The enzyme catalyses tRNA(Asp) + L-aspartate + ATP = L-aspartyl-tRNA(Asp) + AMP + diphosphate. Functionally, catalyzes the attachment of L-aspartate to tRNA(Asp) in a two-step reaction: L-aspartate is first activated by ATP to form Asp-AMP and then transferred to the acceptor end of tRNA(Asp). The sequence is that of Aspartate--tRNA ligase from Vibrio cholerae serotype O1 (strain ATCC 39541 / Classical Ogawa 395 / O395).